We begin with the raw amino-acid sequence, 81 residues long: U1-sicaritoxin-Li1c (81 aa).

The propeptide occupies 1–16; sequence ARGDAEKWESLISEER. 4 cysteine pairs are disulfide-bonded: cysteine 18/cysteine 35, cysteine 26/cysteine 40, cysteine 34/cysteine 53, and cysteine 42/cysteine 51. Arginine 62 carries the arginine amide modification. Residues 66–81 constitute a propeptide that is removed on maturation; it reads ALMLDPETHRLLFSED.

Belongs to the neurotoxin 28 (Litx) family. In terms of tissue distribution, expressed by the venom gland.

The protein localises to the secreted. Its function is as follows. Toxin active against insects (S.frugiperda larvae). May act on sodium (Nav) or calcium (Cav) channels. This is U1-sicaritoxin-Li1c from Loxosceles intermedia (Brown spider).